We begin with the raw amino-acid sequence, 70 residues long: Sec-independent protein translocase protein TatA (70 aa).

A helical transmembrane segment spans residues 1-21 (MAIGVNQLLIILVIIVLLFGA).

It belongs to the TatA/E family. The Tat system comprises two distinct complexes: a TatABC complex, containing multiple copies of TatA, TatB and TatC subunits, and a separate TatA complex, containing only TatA subunits. Substrates initially bind to the TatABC complex, which probably triggers association of the separate TatA complex to form the active translocon.

It is found in the cell inner membrane. Part of the twin-arginine translocation (Tat) system that transports large folded proteins containing a characteristic twin-arginine motif in their signal peptide across membranes. TatA could form the protein-conducting channel of the Tat system. This chain is Sec-independent protein translocase protein TatA, found in Campylobacter curvus (strain 525.92).